A 637-amino-acid polypeptide reads, in one-letter code: 3D-(3,5/4)-trihydroxycyclohexane-1,2-dione hydrolase (637 aa).

Glu66 is a thiamine diphosphate binding site. Residues 442-522 are thiamine pyrophosphate binding; sequence SLPGDLQRLW…INVLLFDNSG (81 aa). 2 residues coordinate Mg(2+): Asp493 and Asn520.

The protein belongs to the TPP enzyme family. The cofactor is Mg(2+). Requires thiamine diphosphate as cofactor.

It catalyses the reaction 3D-3,5/4-trihydroxycyclohexane-1,2-dione + H2O = 5-deoxy-D-glucuronate + H(+). Its pathway is polyol metabolism; myo-inositol degradation into acetyl-CoA; acetyl-CoA from myo-inositol: step 3/7. Its function is as follows. Involved in the cleavage of the C1-C2 bond of 3D-(3,5/4)-trihydroxycyclohexane-1,2-dione (THcHDO) to yield 5-deoxy-glucuronate (5DG). This is 3D-(3,5/4)-trihydroxycyclohexane-1,2-dione hydrolase (iolD) from Bacillus subtilis (strain 168).